The primary structure comprises 205 residues: Small ribosomal subunit protein uS4 (205 aa).

A disordered region spans residues 19 to 45 (IWGRPKSPVNRREYGPGQHGQRRKGKL). The S4 RNA-binding domain maps to 94–157 (SRLDAVVYRA…KQLVIVLEAV (64 aa)).

It belongs to the universal ribosomal protein uS4 family. As to quaternary structure, part of the 30S ribosomal subunit. Contacts protein S5. The interaction surface between S4 and S5 is involved in control of translational fidelity.

One of the primary rRNA binding proteins, it binds directly to 16S rRNA where it nucleates assembly of the body of the 30S subunit. In terms of biological role, with S5 and S12 plays an important role in translational accuracy. This is Small ribosomal subunit protein uS4 from Brucella anthropi (strain ATCC 49188 / DSM 6882 / CCUG 24695 / JCM 21032 / LMG 3331 / NBRC 15819 / NCTC 12168 / Alc 37) (Ochrobactrum anthropi).